A 427-amino-acid polypeptide reads, in one-letter code: Trigger factor (427 aa).

The PPIase FKBP-type domain maps to 163–248 (GDTVVIDFVG…VHEVKAKEVP (86 aa)).

The protein belongs to the FKBP-type PPIase family. Tig subfamily.

The protein localises to the cytoplasm. It catalyses the reaction [protein]-peptidylproline (omega=180) = [protein]-peptidylproline (omega=0). In terms of biological role, involved in protein export. Acts as a chaperone by maintaining the newly synthesized protein in an open conformation. Functions as a peptidyl-prolyl cis-trans isomerase. The polypeptide is Trigger factor (Streptococcus equi subsp. equi (strain 4047)).